A 274-amino-acid chain; its full sequence is 4-diphosphocytidyl-2-C-methyl-D-erythritol kinase (274 aa).

Lysine 8 is an active-site residue. 94-104 (PSGAGLGGGSA) contacts ATP. Aspartate 136 is an active-site residue.

This sequence belongs to the GHMP kinase family. IspE subfamily.

It catalyses the reaction 4-CDP-2-C-methyl-D-erythritol + ATP = 4-CDP-2-C-methyl-D-erythritol 2-phosphate + ADP + H(+). Its pathway is isoprenoid biosynthesis; isopentenyl diphosphate biosynthesis via DXP pathway; isopentenyl diphosphate from 1-deoxy-D-xylulose 5-phosphate: step 3/6. Its function is as follows. Catalyzes the phosphorylation of the position 2 hydroxy group of 4-diphosphocytidyl-2C-methyl-D-erythritol. The polypeptide is 4-diphosphocytidyl-2-C-methyl-D-erythritol kinase (Bacteroides fragilis (strain ATCC 25285 / DSM 2151 / CCUG 4856 / JCM 11019 / LMG 10263 / NCTC 9343 / Onslow / VPI 2553 / EN-2)).